The primary structure comprises 162 residues: Large ribosomal subunit protein uL15 (162 aa).

Basic and acidic residues predominate over residues 1 to 13 (MKLNEIRDNEGAT). The interval 1 to 37 (MKLNEIRDNEGATKNRMRVGRGIGSGKGKTAGRGVKG) is disordered. Over residues 21 to 35 (RGIGSGKGKTAGRGV) the composition is skewed to gly residues.

It belongs to the universal ribosomal protein uL15 family. As to quaternary structure, part of the 50S ribosomal subunit.

In terms of biological role, binds to the 23S rRNA. This chain is Large ribosomal subunit protein uL15, found in Methylobacterium nodulans (strain LMG 21967 / CNCM I-2342 / ORS 2060).